A 264-amino-acid polypeptide reads, in one-letter code: uncharacterized protein (264 aa).

The first 21 residues, 1-21, serve as a signal peptide directing secretion; sequence MMWNYFVTCIVLYANIISIHT. Residues 182–247 are disordered; that stretch reads QQPNAAQVPT…AANNGLDLTS (66 aa). The segment covering 190-213 has biased composition (low complexity); that stretch reads PTTSQQQPTSNTGGQQPPTNASNP. An N-linked (GlcNAc...) asparagine glycan is attached at Asn-209. Positions 214–226 are enriched in pro residues; that stretch reads PTNPQPTPTPAQP. Residues 230 to 247 are compositionally biased toward polar residues; that stretch reads GTQVQQTPAANNGLDLTS.

In terms of tissue distribution, component of the acid-insoluble and acid-soluble organic matrix of calcified layers of the shell (at protein level).

It localises to the secreted. This is an uncharacterized protein from Lottia gigantea (Giant owl limpet).